The sequence spans 106 residues: Large ribosomal subunit protein eL42 (106 aa).

This sequence belongs to the eukaryotic ribosomal protein eL42 family.

The protein is Large ribosomal subunit protein eL42 (RPL44) of Debaryomyces hansenii (strain ATCC 36239 / CBS 767 / BCRC 21394 / JCM 1990 / NBRC 0083 / IGC 2968) (Yeast).